Here is a 173-residue protein sequence, read N- to C-terminus: Crossover junction endodeoxyribonuclease RuvC (173 aa).

Active-site residues include Asp-8, Glu-67, and Asp-139. 3 residues coordinate Mg(2+): Asp-8, Glu-67, and Asp-139.

The protein belongs to the RuvC family. Homodimer which binds Holliday junction (HJ) DNA. The HJ becomes 2-fold symmetrical on binding to RuvC with unstacked arms; it has a different conformation from HJ DNA in complex with RuvA. In the full resolvosome a probable DNA-RuvA(4)-RuvB(12)-RuvC(2) complex forms which resolves the HJ. The cofactor is Mg(2+).

It is found in the cytoplasm. The catalysed reaction is Endonucleolytic cleavage at a junction such as a reciprocal single-stranded crossover between two homologous DNA duplexes (Holliday junction).. Its function is as follows. The RuvA-RuvB-RuvC complex processes Holliday junction (HJ) DNA during genetic recombination and DNA repair. Endonuclease that resolves HJ intermediates. Cleaves cruciform DNA by making single-stranded nicks across the HJ at symmetrical positions within the homologous arms, yielding a 5'-phosphate and a 3'-hydroxyl group; requires a central core of homology in the junction. The consensus cleavage sequence is 5'-(A/T)TT(C/G)-3'. Cleavage occurs on the 3'-side of the TT dinucleotide at the point of strand exchange. HJ branch migration catalyzed by RuvA-RuvB allows RuvC to scan DNA until it finds its consensus sequence, where it cleaves and resolves the cruciform DNA. In Shewanella frigidimarina (strain NCIMB 400), this protein is Crossover junction endodeoxyribonuclease RuvC.